Consider the following 156-residue polypeptide: 6,7-dimethyl-8-ribityllumazine synthase (156 aa).

5-amino-6-(D-ribitylamino)uracil is bound by residues Phe-23, 57–59 (AYE), and 81–83 (AII). (2S)-2-hydroxy-3-oxobutyl phosphate is bound at residue 86 to 87 (GT). His-89 (proton donor) is an active-site residue. 5-amino-6-(D-ribitylamino)uracil is bound at residue Phe-114. Position 128 (Arg-128) interacts with (2S)-2-hydroxy-3-oxobutyl phosphate.

The protein belongs to the DMRL synthase family.

It carries out the reaction (2S)-2-hydroxy-3-oxobutyl phosphate + 5-amino-6-(D-ribitylamino)uracil = 6,7-dimethyl-8-(1-D-ribityl)lumazine + phosphate + 2 H2O + H(+). Its pathway is cofactor biosynthesis; riboflavin biosynthesis; riboflavin from 2-hydroxy-3-oxobutyl phosphate and 5-amino-6-(D-ribitylamino)uracil: step 1/2. Functionally, catalyzes the formation of 6,7-dimethyl-8-ribityllumazine by condensation of 5-amino-6-(D-ribitylamino)uracil with 3,4-dihydroxy-2-butanone 4-phosphate. This is the penultimate step in the biosynthesis of riboflavin. This is 6,7-dimethyl-8-ribityllumazine synthase from Helicobacter pylori (strain HPAG1).